Here is a 598-residue protein sequence, read N- to C-terminus: Elongation factor 4 (598 aa).

The 183-residue stretch at 2-184 folds into the tr-type G domain; it reads KNIRNFSIIA…EIVRCIPPPV (183 aa). Residues 14–19 and 131–134 contribute to the GTP site; these read DHGKST and NKID.

The protein belongs to the TRAFAC class translation factor GTPase superfamily. Classic translation factor GTPase family. LepA subfamily.

The protein resides in the cell inner membrane. The enzyme catalyses GTP + H2O = GDP + phosphate + H(+). In terms of biological role, required for accurate and efficient protein synthesis under certain stress conditions. May act as a fidelity factor of the translation reaction, by catalyzing a one-codon backward translocation of tRNAs on improperly translocated ribosomes. Back-translocation proceeds from a post-translocation (POST) complex to a pre-translocation (PRE) complex, thus giving elongation factor G a second chance to translocate the tRNAs correctly. Binds to ribosomes in a GTP-dependent manner. This Psychromonas ingrahamii (strain DSM 17664 / CCUG 51855 / 37) protein is Elongation factor 4.